The primary structure comprises 385 residues: Polyketide synthase 4 (385 aa).

The active site involves cysteine 157.

It belongs to the thiolase-like superfamily. Chalcone/stilbene synthases family. Expressed in glandular trichomes.

Its subcellular location is the cytoplasm. In terms of biological role, polyketide synthase responsible for the biosynthesis of secondary metabolites. The polypeptide is Polyketide synthase 4 (PKSG4) (Cannabis sativa (Hemp)).